The chain runs to 67 residues: uncharacterized protein (67 aa).

This is an uncharacterized protein from Rickettsia prowazekii (strain Madrid E).